A 360-amino-acid chain; its full sequence is RGG repeats nuclear RNA binding protein B (360 aa).

Disordered regions lie at residues Met1–Met216 and Met250–Lys360. Ala2 carries the N-acetylalanine modification. Residues Pro58 to Gly77 show a composition bias toward gly residues. Composition is skewed to basic and acidic residues over residues Arg99–Arg108 and Asp132–Ala157. Positions Trp162–Ser176 are enriched in polar residues. 3 stretches are compositionally biased toward basic and acidic residues: residues Leu184 to Met216, Ser258 to Arg283, and Arg311 to Arg336. One can recognise an FF domain in the interval Lys223–Ile288. Phosphoserine is present on Ser258.

The protein belongs to the SERBP1-HABP4 family.

Its subcellular location is the nucleus. The protein resides in the cytoplasm. It is found in the perinuclear region. In terms of biological role, ribosome-binding protein that acts as a regulator of mRNA translation by promoting ribosome inactivation. Binds RNA. The polypeptide is RGG repeats nuclear RNA binding protein B (Arabidopsis thaliana (Mouse-ear cress)).